A 121-amino-acid chain; its full sequence is Large ribosomal subunit protein bL17 (121 aa).

The protein belongs to the bacterial ribosomal protein bL17 family. Part of the 50S ribosomal subunit. Contacts protein L32.

The chain is Large ribosomal subunit protein bL17 from Rubrobacter xylanophilus (strain DSM 9941 / JCM 11954 / NBRC 16129 / PRD-1).